A 1719-amino-acid polypeptide reads, in one-letter code: Serine/threonine-protein kinase MRCK alpha (1719 aa).

A Protein kinase domain is found at 77–343; it reads FEILKVIGRG…IEDFKKHPFF (267 aa). Residues 83–91 and Lys106 each bind ATP; that span reads IGRGAFGEV. Asp201 serves as the catalytic Proton acceptor. Phosphoserine; by autocatalysis occurs at positions 222 and 234. The residue at position 240 (Thr240) is a Phosphothreonine; by autocatalysis. One can recognise an AGC-kinase C-terminal domain in the interval 344–414; sequence SGIDWDNIRN…TSSCVLSDRS (71 aa). Coiled coils occupy residues 437 to 670, 713 to 820, and 880 to 943; these read NNLA…KQKQ, SEIK…WEAQ, and LELQ…SEKG. Residues 999–1049 form a Phorbol-ester/DAG-type zinc finger; sequence THQFFVKSFTAPTKCHQCTSLMVGLIRQGCSCEVCGFSCHITCVNKAPTVC. Positions 1069–1188 constitute a PH domain; it reads GTAYEGHVRI…WVGVLSELHK (120 aa). The region spanning 1214–1486 is the CNH domain; the sequence is IKTTQAAAII…RPLNTEGSLN (273 aa). Ser1532 is subject to Phosphoserine. The 14-residue stretch at 1558-1571 folds into the CRIB domain; sequence ISNPTNFNHIAHMG. The disordered stretch occupies residues 1579-1719; the sequence is LKDLPMNPRP…ESTDRGSWDP (141 aa). Residues 1591–1606 are compositionally biased toward polar residues; it reads SRTVFSGSVSIPSITK. A phosphoserine mark is found at Ser1598, Ser1600, Ser1616, Ser1638, Ser1651, Ser1656, Ser1680, Ser1706, and Ser1708. Over residues 1612–1627 the composition is skewed to low complexity; it reads GRSMSASSGLSARSSA. Low complexity predominate over residues 1652-1661; sequence PSEGSLSSGG.

This sequence belongs to the protein kinase superfamily. AGC Ser/Thr protein kinase family. DMPK subfamily. As to quaternary structure, homodimer and homotetramer via the coiled coil regions. Interacts tightly with GTP-bound but not GDP-bound CDC42. Forms a tripartite complex with MYO18A and LRP35A with the latter acting as an adapter connecting CDC42BPA and MYO18A. LRP35A binding results in activation of CDC42BPA by abolition of its negative autoregulation. Interacts with LURAP1. Interacts (via AGC-kinase C-terminal domain) with FAM89B/LRAP25 (via LRR repeat). Forms a tripartite complex with FAM89B/LRAP25 and LIMK1. Mg(2+) is required as a cofactor. Proteolytically cleaved by caspases upon apoptosis induction. The cleavage at Asp-478 by CASP3 increases its kinase activity (in vitro).

It is found in the cytoplasm. The protein resides in the cell projection. Its subcellular location is the lamellipodium. It carries out the reaction L-seryl-[protein] + ATP = O-phospho-L-seryl-[protein] + ADP + H(+). The catalysed reaction is L-threonyl-[protein] + ATP = O-phospho-L-threonyl-[protein] + ADP + H(+). Maintained in an inactive, closed conformation by an interaction between the kinase domain and the negative autoregulatory C-terminal coiled-coil region. Agonist binding to the phorbol ester binding site disrupts this, releasing the kinase domain to allow N-terminus-mediated dimerization and kinase activation by transautophosphorylation. Inhibited by chelerythrine chloride. Its function is as follows. Serine/threonine-protein kinase which is an important downstream effector of CDC42 and plays a role in the regulation of cytoskeleton reorganization and cell migration. Regulates actin cytoskeletal reorganization via phosphorylation of PPP1R12C and MYL9/MLC2. In concert with MYO18A and LRP35A, is involved in modulating lamellar actomyosin retrograde flow that is crucial to cell protrusion and migration. Phosphorylates: PPP1R12A and LIMK2. May play a role in TFRC-mediated iron uptake. In concert with FAM89B/LRAP25 mediates the targeting of LIMK1 to the lamellipodium resulting in its activation and subsequent phosphorylation of CFL1 which is important for lamellipodial F-actin regulation. Triggers the formation of an extrusion apical actin ring required for epithelial extrusion of apoptotic cells. This chain is Serine/threonine-protein kinase MRCK alpha (Cdc42bpa), found in Mus musculus (Mouse).